Consider the following 212-residue polypeptide: Uridine kinase (212 aa).

13 to 20 (GASASGKS) provides a ligand contact to ATP.

The protein belongs to the uridine kinase family.

The protein resides in the cytoplasm. It carries out the reaction uridine + ATP = UMP + ADP + H(+). It catalyses the reaction cytidine + ATP = CMP + ADP + H(+). Its pathway is pyrimidine metabolism; CTP biosynthesis via salvage pathway; CTP from cytidine: step 1/3. The protein operates within pyrimidine metabolism; UMP biosynthesis via salvage pathway; UMP from uridine: step 1/1. This Shewanella amazonensis (strain ATCC BAA-1098 / SB2B) protein is Uridine kinase.